The chain runs to 162 residues: Ribonuclease P protein component (162 aa).

Residues 1–67 (MDEKDLAAQP…GGKLVSLKGD (67 aa)) form a disordered region. Residues 21 to 31 (GPHEDPRRQEG) are compositionally biased toward basic and acidic residues.

This sequence belongs to the RnpA family. In terms of assembly, consists of a catalytic RNA component (M1 or rnpB) and a protein subunit.

It carries out the reaction Endonucleolytic cleavage of RNA, removing 5'-extranucleotides from tRNA precursor.. In terms of biological role, RNaseP catalyzes the removal of the 5'-leader sequence from pre-tRNA to produce the mature 5'-terminus. It can also cleave other RNA substrates such as 4.5S RNA. The protein component plays an auxiliary but essential role in vivo by binding to the 5'-leader sequence and broadening the substrate specificity of the ribozyme. The sequence is that of Ribonuclease P protein component from Thermus brockianus.